The chain runs to 544 residues: Coiled-coil domain-containing protein 82 (544 aa).

Residues 1 to 14 (MIHVRRHETRRNSK) show a composition bias toward basic residues. The tract at residues 1 to 294 (MIHVRRHETR…ESDEDGDDYI (294 aa)) is disordered. A compositionally biased stretch (basic and acidic residues) spans 16–27 (HVPEQKSRVDWR). The span at 39-67 (DSDEELDSEEFDSDEELDSDESFENDEEL) shows a compositional bias: acidic residues. Phosphoserine is present on residues S88, S131, S154, S195, and S219. The segment covering 88–108 (SKIQSEGNDSKCLINSGNGST) has biased composition (polar residues). A compositionally biased stretch (basic and acidic residues) spans 112-132 (ETNKIKHRNIDLQDQEKHLSQ). Positions 223–248 (MEQKTPEKTLAAQKREKLQKLKELSK) are enriched in basic and acidic residues. T227 carries the post-translational modification Phosphothreonine. Residues 229–256 (EKTLAAQKREKLQKLKELSKQRSRQRRS) are a coiled coil. The span at 273–294 (DEVDEEEEEDNYESDEDGDDYI) shows a compositional bias: acidic residues. Residue S329 is modified to Phosphoserine.

The sequence is that of Coiled-coil domain-containing protein 82 (CCDC82) from Homo sapiens (Human).